The chain runs to 173 residues: Adenine phosphoribosyltransferase (173 aa).

It belongs to the purine/pyrimidine phosphoribosyltransferase family. In terms of assembly, homodimer.

The protein localises to the cytoplasm. It carries out the reaction AMP + diphosphate = 5-phospho-alpha-D-ribose 1-diphosphate + adenine. It functions in the pathway purine metabolism; AMP biosynthesis via salvage pathway; AMP from adenine: step 1/1. Its function is as follows. Catalyzes a salvage reaction resulting in the formation of AMP, that is energically less costly than de novo synthesis. The polypeptide is Adenine phosphoribosyltransferase (Thermoanaerobacter pseudethanolicus (strain ATCC 33223 / 39E) (Clostridium thermohydrosulfuricum)).